The sequence spans 544 residues: Chaperonin GroEL (544 aa).

Residues 30–33, Lys51, 87–91, Gly415, and Asp495 each bind ATP; these read TLGP and DGTTT.

It belongs to the chaperonin (HSP60) family. As to quaternary structure, forms a cylinder of 14 subunits composed of two heptameric rings stacked back-to-back. Interacts with the co-chaperonin GroES.

It is found in the cytoplasm. The enzyme catalyses ATP + H2O + a folded polypeptide = ADP + phosphate + an unfolded polypeptide.. Functionally, together with its co-chaperonin GroES, plays an essential role in assisting protein folding. The GroEL-GroES system forms a nano-cage that allows encapsulation of the non-native substrate proteins and provides a physical environment optimized to promote and accelerate protein folding. This is Chaperonin GroEL from Neisseria meningitidis serogroup C (strain 053442).